The primary structure comprises 1335 residues: Protein SPATA31F1 (1335 aa).

The chain crosses the membrane as a helical span at residues 8–28 (LWEVGYPLYIYGSIFIVIVII). Disordered regions lie at residues 403–424 (ALKA…SGSD), 480–502 (LPKT…MSPS), 972–1002 (VQQN…SGDM), 1019–1141 (PSLE…LQDS), and 1248–1335 (ENVA…GHPT). A compositionally biased stretch (polar residues) spans 414–424 (SGGQDNDSGSD). The segment covering 972 to 1000 (VQQNQKQSNSKAVPQGSAHSVSKISQPSG) has biased composition (polar residues). Composition is skewed to basic and acidic residues over residues 1047–1064 (NRED…REGD), 1071–1083 (STRE…EDQR), and 1129–1139 (PGEKESEKDLQ).

The protein belongs to the SPATA31 family.

The protein localises to the membrane. This is Protein SPATA31F1 from Homo sapiens (Human).